Consider the following 442-residue polypeptide: Glutamate-1-semialdehyde 2,1-aminomutase (442 aa).

Lys282 is subject to N6-(pyridoxal phosphate)lysine.

It belongs to the class-III pyridoxal-phosphate-dependent aminotransferase family. HemL subfamily. As to quaternary structure, homodimer. Pyridoxal 5'-phosphate is required as a cofactor.

It localises to the cytoplasm. The catalysed reaction is (S)-4-amino-5-oxopentanoate = 5-aminolevulinate. The protein operates within porphyrin-containing compound metabolism; protoporphyrin-IX biosynthesis; 5-aminolevulinate from L-glutamyl-tRNA(Glu): step 2/2. This is Glutamate-1-semialdehyde 2,1-aminomutase from Polaromonas sp. (strain JS666 / ATCC BAA-500).